A 68-amino-acid chain; its full sequence is Phylloseptin-SP1 (68 aa).

The N-terminal stretch at 1 to 22 (MAFLKKSLFLVLFLGLVSLSIC) is a signal peptide. The propeptide occupies 23–45 (EEKERETKEEENEQEDDNREEKR). Leucine amide is present on Leu67.

In terms of tissue distribution, expressed by the skin glands.

The protein resides in the secreted. Functionally, weak cationic amphipathic alpha-helical antimicrobial peptide with weak activity against Gram-positive and Gram-negative bacteria and fungi. Has been tested against E.coli (MIC&gt;217.69 uM), S.aureus (MIC&gt;217.69 uM), K.pneumoniae (MIC&gt;189.00 uM) and C.albicans (MIC&gt;217.69 uM). Shows a moderate hemolytic activity. This chain is Phylloseptin-SP1, found in Agalychnis spurrelli (Gliding leaf frog).